A 245-amino-acid polypeptide reads, in one-letter code: tRNA pseudouridine synthase A (245 aa).

Aspartate 52 functions as the Nucleophile in the catalytic mechanism. Tyrosine 111 is a substrate binding site.

Belongs to the tRNA pseudouridine synthase TruA family. In terms of assembly, homodimer.

It catalyses the reaction uridine(38/39/40) in tRNA = pseudouridine(38/39/40) in tRNA. In terms of biological role, formation of pseudouridine at positions 38, 39 and 40 in the anticodon stem and loop of transfer RNAs. In Zymomonas mobilis subsp. mobilis (strain ATCC 31821 / ZM4 / CP4), this protein is tRNA pseudouridine synthase A.